The following is an 87-amino-acid chain: U14-lycotoxin-Ls1a (87 aa).

Residues 1-20 form the signal peptide; sequence MNSKVFAVLLLLALLTCVLS. The 46-residue stretch at 21-66 folds into the WAP domain; sequence EKYCPTPRNTSCKKMNIRNNCCRDSDCTSNAFCCAEPCGNFCHKAS. 5 disulfide bridges follow: cysteine 24-cysteine 54, cysteine 32-cysteine 58, cysteine 41-cysteine 53, cysteine 42-cysteine 80, and cysteine 47-cysteine 62.

The protein belongs to the venom protein 11 family. 01 (wap-1) subfamily. In terms of processing, contains 5 disulfide bonds. As to expression, expressed by the venom gland.

The protein resides in the secreted. Has antibacterial activity. This Lycosa singoriensis (Wolf spider) protein is U14-lycotoxin-Ls1a.